The following is an 804-amino-acid chain: DNA gyrase subunit B (804 aa).

The 116-residue stretch at 431-546 (CEMYIVEGDS…NGCVYIAQPP (116 aa)) folds into the Toprim domain. Mg(2+) is bound by residues Glu-437, Asp-511, and Asp-513.

This sequence belongs to the type II topoisomerase GyrB family. Heterotetramer, composed of two GyrA and two GyrB chains. In the heterotetramer, GyrA contains the active site tyrosine that forms a transient covalent intermediate with DNA, while GyrB binds cofactors and catalyzes ATP hydrolysis. Requires Mg(2+) as cofactor. It depends on Mn(2+) as a cofactor. Ca(2+) serves as cofactor.

The protein resides in the cytoplasm. It catalyses the reaction ATP-dependent breakage, passage and rejoining of double-stranded DNA.. In terms of biological role, a type II topoisomerase that negatively supercoils closed circular double-stranded (ds) DNA in an ATP-dependent manner to modulate DNA topology and maintain chromosomes in an underwound state. Negative supercoiling favors strand separation, and DNA replication, transcription, recombination and repair, all of which involve strand separation. Also able to catalyze the interconversion of other topological isomers of dsDNA rings, including catenanes and knotted rings. Type II topoisomerases break and join 2 DNA strands simultaneously in an ATP-dependent manner. The chain is DNA gyrase subunit B from Chlamydia muridarum (strain MoPn / Nigg).